The sequence spans 60 residues: Large ribosomal subunit protein uL30 (60 aa).

It belongs to the universal ribosomal protein uL30 family. As to quaternary structure, part of the 50S ribosomal subunit.

The polypeptide is Large ribosomal subunit protein uL30 (Bacillus anthracis (strain A0248)).